The sequence spans 758 residues: Spastin (758 aa).

Residues 1–103 (MVRTKNQSSS…SPRSGHHHSY (103 aa)) are disordered. The Cytoplasmic portion of the chain corresponds to 1 to 121 (MVRTKNQSSS…KQNLYVVSFP (121 aa)). The tract at residues 1–210 (MVRTKNQSSS…RPIQPLEMAA (210 aa)) is required for localization to punctate cytoplasmic foci. Composition is skewed to low complexity over residues 8-28 (SSSS…SSGA), 43-58 (RSSS…AGGS), 66-76 (SSNRRSPGSSP), and 85-95 (TDDLTPTTCSP). Residues 122 to 142 (IIFLFNVLRSLIYQLFCIFRY) constitute an intramembrane region (helical). The Cytoplasmic segment spans residues 143–758 (LYGASTKVIY…WSQDYGDITI (616 aa)). Composition is skewed to polar residues over residues 169–180 (SKEQQQSLNHPS) and 189–198 (QEQQLSNQPQ). The interval 169-202 (SKEQQQSLNHPSELNREGDGQEQQLSNQPQRFRP) is disordered. The segment at 208–758 (MAANRPGGGY…WSQDYGDITI (551 aa)) is sufficient for interaction with microtubules and microtubule severing. The MIT domain occupies 233-308 (HRRAFEYISK…SMARDRLHFL (76 aa)). Residues 323–339 (KEKQKEEARSKPQKSRE) show a composition bias toward basic and acidic residues. The tract at residues 323–454 (KEKQKEEARS…GPSGSGASTP (132 aa)) is disordered. Composition is skewed to polar residues over residues 390 to 406 (NKSQ…TSVG) and 425 to 454 (QFSS…ASTP). The interval 443–455 (NNGPSGSGASTPV) is required for interaction with microtubules. 523–530 (GPPGNGKT) serves as a coordination point for ATP.

Belongs to the AAA ATPase family. Spastin subfamily. In terms of assembly, homohexamer. The homohexamer is stabilized by ATP-binding. The homohexamer may adopt a ring conformation through which microtubules pass prior to being severed. Interacts with microtubules. Interacts with atl; may be involved in microtubule dynamics.

The protein resides in the membrane. It localises to the cytoplasm. The protein localises to the cytoskeleton. It is found in the microtubule organizing center. Its subcellular location is the centrosome. The protein resides in the chromosome. It localises to the lipid droplet. The enzyme catalyses n ATP + n H2O + a microtubule = n ADP + n phosphate + (n+1) alpha/beta tubulin heterodimers.. In terms of biological role, ATP-dependent microtubule severing protein. Stimulates microtubule minus-end depolymerization and poleward microtubule flux in the mitotic spindle. Regulates microtubule stability in the neuromuscular junction synapse. Involved in lipid metabolism by regulating the size and distribution of lipid droplets. Involved in axon regeneration by regulating microtubule severing. This chain is Spastin, found in Drosophila simulans (Fruit fly).